A 239-amino-acid polypeptide reads, in one-letter code: Ribose-5-phosphate isomerase A (239 aa).

Residues 40–43, 96–99, and 110–113 contribute to the substrate site; these read SGST, DGAD, and KGGG. Glu119 serves as the catalytic Proton acceptor. Lys137 provides a ligand contact to substrate.

Belongs to the ribose 5-phosphate isomerase family. As to quaternary structure, homodimer.

The enzyme catalyses aldehydo-D-ribose 5-phosphate = D-ribulose 5-phosphate. Its pathway is carbohydrate degradation; pentose phosphate pathway; D-ribose 5-phosphate from D-ribulose 5-phosphate (non-oxidative stage): step 1/1. Catalyzes the reversible conversion of ribose-5-phosphate to ribulose 5-phosphate. The chain is Ribose-5-phosphate isomerase A from Methanococcus maripaludis (strain C7 / ATCC BAA-1331).